Reading from the N-terminus, the 443-residue chain is Xaa-Pro dipeptidase (443 aa).

Positions 246, 257, 339, 384, and 423 each coordinate Mn(2+).

The protein belongs to the peptidase M24B family. Bacterial-type prolidase subfamily. Mn(2+) serves as cofactor.

The enzyme catalyses Xaa-L-Pro dipeptide + H2O = an L-alpha-amino acid + L-proline. Functionally, splits dipeptides with a prolyl residue in the C-terminal position. This is Xaa-Pro dipeptidase from Escherichia coli O81 (strain ED1a).